Here is a 164-residue protein sequence, read N- to C-terminus: Large ribosomal subunit protein uL15 (164 aa).

Disordered regions lie at residues 1–49 and 143–164; these read MTKL…SIAG and EKAG…SAEA. The segment covering 22-36 has biased composition (gly residues); that stretch reads RGPGSGKGKTAGRGV.

Belongs to the universal ribosomal protein uL15 family. In terms of assembly, part of the 50S ribosomal subunit.

Binds to the 23S rRNA. This chain is Large ribosomal subunit protein uL15, found in Phenylobacterium zucineum (strain HLK1).